A 216-amino-acid chain; its full sequence is Large ribosomal subunit protein uL1B (216 aa).

Ser-11 is subject to Phosphoserine.

It belongs to the universal ribosomal protein uL1 family. In terms of assembly, component of the large ribosomal subunit (LSU). Mature yeast ribosomes consist of a small (40S) and a large (60S) subunit. The 40S small subunit contains 1 molecule of ribosomal RNA (18S rRNA) and at least 33 different proteins. The large 60S subunit contains 3 rRNA molecules (25S, 5.8S and 5S rRNA) and at least 46 different proteins. uL1 forms part of the L1 stalk.

Its subcellular location is the cytoplasm. Functionally, component of the ribosome, a large ribonucleoprotein complex responsible for the synthesis of proteins in the cell. The small ribosomal subunit (SSU) binds messenger RNAs (mRNAs) and translates the encoded message by selecting cognate aminoacyl-transfer RNA (tRNA) molecules. The large subunit (LSU) contains the ribosomal catalytic site termed the peptidyl transferase center (PTC), which catalyzes the formation of peptide bonds, thereby polymerizing the amino acids delivered by tRNAs into a polypeptide chain. The nascent polypeptides leave the ribosome through a tunnel in the LSU and interact with protein factors that function in enzymatic processing, targeting, and the membrane insertion of nascent chains at the exit of the ribosomal tunnel. uL1 forms part of the L1 stalk, a mobile element that plays a role in evacuating the exit-site tRNA. The protein is Large ribosomal subunit protein uL1B (rpl101) of Schizosaccharomyces pombe (strain 972 / ATCC 24843) (Fission yeast).